Consider the following 254-residue polypeptide: Syntaxin-6 (254 aa).

Residues 1-233 (MSMEDPFFVV…VSHMTSDRRQ (233 aa)) are Cytoplasmic-facing. The stretch at 46 to 72 (TTNELRNNLRSIEWDLEDLDETISIVE) forms a coiled coil. The interval 103–138 (KDQMSNSSMQALAERKNRQALLGESSSQSWSSGPDK) is disordered. The t-SNARE coiled-coil homology domain occupies 162–224 (QLIVEQQDEQ…DNVMKKLAKV (63 aa)). A helical; Anchor for type IV membrane protein membrane pass occupies residues 234 to 254 (WCAIIVLFVILLVVLVLFLVL).

The protein belongs to the syntaxin family.

The protein localises to the golgi apparatus membrane. The protein resides in the golgi apparatus. Its subcellular location is the trans-Golgi network membrane. It localises to the recycling endosome membrane. SNARE promoting movement of transport vesicles to target membranes. Targets endosomes to the trans-Golgi network, and may therefore function in retrograde trafficking. Together with SNARE STX12, promotes movement of vesicles from endosomes to the cell membrane, and may therefore function in the endocytic recycling pathway. The sequence is that of Syntaxin-6 (STX6) from Gallus gallus (Chicken).